The sequence spans 608 residues: Zinc finger protein 652 (608 aa).

Serine 57 is modified (phosphoserine). Positions 61-232 (VLADTKMSKP…KRATKEAKAP (172 aa)) are disordered. A compositionally biased stretch (basic and acidic residues) spans 71–97 (HLHETEEQPYFREPRAVSDVHTVKEDR). 2 stretches are compositionally biased toward acidic residues: residues 98–108 (ENSDDTEEEEE) and 151–162 (EEDEEETEEEAT). The residue at position 100 (serine 100) is a Phosphoserine. Threonine 103 bears the Phosphothreonine mark. Positions 194-208 (AASAAAATTSPAPRT) are enriched in low complexity. A phosphoserine mark is found at serine 196 and serine 203. The C2H2-type 1 zinc finger occupies 244–267 (LTCEKCPRVFNTRWYLEKHMNVTH). Residues 271–293 (QICDKCGKKFVLESELSLHQQTD) form a C2H2-type 2; degenerate zinc finger. 6 C2H2-type zinc fingers span residues 298–321 (IQCVSCNKSFKKLWSLHEHIKIVH), 328–350 (FACEICEKKFYTMAHVRKHMVAH), 356–378 (FTCETCGKSFKRSMSLKVHSLQH), 384–406 (FRCENCDERFQYKYQLRSHMSIH), 412–434 (FMCQWCGKDFNMKQYFDEHMKTH), and 440–462 (FICEICGKSFTSRPNMKRHRRTH). The C2H2-type 9; degenerate zinc-finger motif lies at 468–491 (YPCDVCGQRFRFSNMLKAHKEKCF). The tract at residues 497-608 (VNVPPAVQIP…KNSAAPAQHH (112 aa)) is mediates interaction with CBFA2T3.

This sequence belongs to the krueppel C2H2-type zinc-finger protein family. As to quaternary structure, interacts with CBFA2T3.

It localises to the nucleus. Functionally, functions as a transcriptional repressor. The sequence is that of Zinc finger protein 652 (Znf652) from Mus musculus (Mouse).